The following is a 265-amino-acid chain: 2-Cys peroxiredoxin BAS1, chloroplastic (265 aa).

A chloroplast-targeting transit peptide spans 1–65 (MACVASSTTL…SSTSRRSFAV (65 aa)). Residues 73 to 232 (PLVGNKAPDF…TMRTLQALQY (160 aa)) enclose the Thioredoxin domain. The Cysteine sulfenic acid (-SOH) intermediate role is filled by cysteine 119.

Belongs to the peroxiredoxin family. AhpC/Prx1 subfamily. Homodimer; disulfide-linked, upon oxidation.

The protein resides in the plastid. It is found in the chloroplast. It carries out the reaction a hydroperoxide + [thioredoxin]-dithiol = an alcohol + [thioredoxin]-disulfide + H2O. Its function is as follows. Thiol-specific peroxidase that catalyzes the reduction of hydrogen peroxide and organic hydroperoxides to water and alcohols, respectively. Plays a role in cell protection against oxidative stress by detoxifying peroxides. May be an antioxidant enzyme particularly in the developing shoot and photosynthesizing leaf. This chain is 2-Cys peroxiredoxin BAS1, chloroplastic (BAS1), found in Spinacia oleracea (Spinach).